The primary structure comprises 196 residues: Probable calcium-binding protein CML32 (196 aa).

3 EF-hand domains span residues 30 to 65 (LNAV…LGLV), 121 to 156 (DEEE…LGLP), and 159 to 194 (GSLA…ITVW). Asp43, Asn45, Asp47, Glu49, Glu54, Asp134, Asp136, Asp138, Glu145, Asp172, Asn174, Asp176, Arg178, and Glu183 together coordinate Ca(2+).

Functionally, potential calcium sensor. The chain is Probable calcium-binding protein CML32 (CML32) from Oryza sativa subsp. japonica (Rice).